A 404-amino-acid chain; its full sequence is MKLPIYLDYAATTPVDPRVAEKMMQCMTMDGIFGNPASRSHRYGWQAEEAVDIARNQVADLINADPREIVFTSGATESDNLAIKGVAHFYQKKGKHIITSKTEHKAVLDTCRQLEREGFEVTYLAPEANGLIPLATIESAMREDTVLVSIMHVNNEIGVIHDINAIGELCRSKKIIFHVDAAQSAGKLPLDVQETKVDLLSISAHKMYGPKGIGALYVRRKPRIRLEAAMHGGGHERGMRSGTLATHQIVGMGEAAAIAKADMEADNARIAGLRDRLWNGVKGIEETYINGDVEQRYCGSLNVSFNFVEGESLMMALKDLAVSSGSACTSASLEPSYVLRALGLNDEMAHSSIRFSIGRFTTEEEIDHAIETINKSIDSLRDMSPLWEMFKDGVDLEQVQWAHH.

Residues 75 to 76, Asn-155, Gln-183, and 203 to 205 each bind pyridoxal 5'-phosphate; these read AT and SAH. N6-(pyridoxal phosphate)lysine is present on Lys-206. Thr-243 contacts pyridoxal 5'-phosphate. Cys-328 (cysteine persulfide intermediate) is an active-site residue. Cys-328 serves as a coordination point for [2Fe-2S] cluster.

This sequence belongs to the class-V pyridoxal-phosphate-dependent aminotransferase family. NifS/IscS subfamily. In terms of assembly, homodimer. Forms a heterotetramer with IscU, interacts with other sulfur acceptors. Pyridoxal 5'-phosphate is required as a cofactor.

Its subcellular location is the cytoplasm. The enzyme catalyses (sulfur carrier)-H + L-cysteine = (sulfur carrier)-SH + L-alanine. The protein operates within cofactor biosynthesis; iron-sulfur cluster biosynthesis. In terms of biological role, master enzyme that delivers sulfur to a number of partners involved in Fe-S cluster assembly, tRNA modification or cofactor biosynthesis. Catalyzes the removal of elemental sulfur atoms from cysteine to produce alanine. Functions as a sulfur delivery protein for Fe-S cluster synthesis onto IscU, an Fe-S scaffold assembly protein, as well as other S acceptor proteins. In Shewanella woodyi (strain ATCC 51908 / MS32), this protein is Cysteine desulfurase IscS.